We begin with the raw amino-acid sequence, 377 residues long: Erythronate-4-phosphate dehydrogenase (377 aa).

2 residues coordinate substrate: S45 and T67. NAD(+) contacts are provided by residues 127–128 (QV), D147, and T176. R209 is an active-site residue. An NAD(+)-binding site is contributed by D233. E238 is an active-site residue. H255 (proton donor) is an active-site residue. Residue G258 coordinates NAD(+). Y259 lines the substrate pocket.

This sequence belongs to the D-isomer specific 2-hydroxyacid dehydrogenase family. PdxB subfamily. Homodimer.

The protein localises to the cytoplasm. It carries out the reaction 4-phospho-D-erythronate + NAD(+) = (R)-3-hydroxy-2-oxo-4-phosphooxybutanoate + NADH + H(+). It participates in cofactor biosynthesis; pyridoxine 5'-phosphate biosynthesis; pyridoxine 5'-phosphate from D-erythrose 4-phosphate: step 2/5. Functionally, catalyzes the oxidation of erythronate-4-phosphate to 3-hydroxy-2-oxo-4-phosphonooxybutanoate. This chain is Erythronate-4-phosphate dehydrogenase, found in Vibrio vulnificus (strain CMCP6).